Here is a 55-residue protein sequence, read N- to C-terminus: uncharacterized protein (55 aa).

This is an uncharacterized protein from Avena byzantina (Oat).